The primary structure comprises 210 residues: N-(5'-phosphoribosyl)anthranilate isomerase (210 aa).

It belongs to the TrpF family.

The catalysed reaction is N-(5-phospho-beta-D-ribosyl)anthranilate = 1-(2-carboxyphenylamino)-1-deoxy-D-ribulose 5-phosphate. It participates in amino-acid biosynthesis; L-tryptophan biosynthesis; L-tryptophan from chorismate: step 3/5. The protein is N-(5'-phosphoribosyl)anthranilate isomerase of Staphylococcus aureus (strain bovine RF122 / ET3-1).